We begin with the raw amino-acid sequence, 492 residues long: Putative sucrose transport protein SUC6 (492 aa).

The tract at residues 1 to 26 is disordered; it reads MSDLQANKDAAAVNRQSSSSSADLNG. Residues 1-33 are Cytoplasmic-facing; sequence MSDLQANKDAAAVNRQSSSSSADLNGPSPMRKM. A compositionally biased stretch (polar residues) spans 14–23; it reads NRQSSSSSAD. At Ser17 the chain carries Phosphoserine. Residues 34–54 traverse the membrane as a helical segment; the sequence is ISVASIAAGIQFGWALQLSLL. At 55–68 the chain is on the extracellular side; it reads TPYVQLLGVPHKWS. A helical transmembrane segment spans residues 69-89; the sequence is SFIWLCGPVSGLLVQPSVGYF. Over 90-101 the chain is Cytoplasmic; that stretch reads SDRCKSRFGRRR. The chain crosses the membrane as a helical span at residues 102-122; sequence PFIAMGALLVAVAVVLIGYAA. Residues 123–139 lie on the Extracellular side of the membrane; sequence DFGHSMGDKVDEPVKMR. Residues 140–160 form a helical membrane-spanning segment; the sequence is AVVIFALGFWILDVANNTLQG. At 161-181 the chain is on the cytoplasmic side; the sequence is PCRAFLGDLAAGDAKKTRTAN. The helical transmembrane segment at 182–202 threads the bilayer; that stretch reads AFFSFFMAVGNVLGYAAGSYT. Residues 203–224 are Extracellular-facing; sequence NLYKIFPFTMTKACDIYCANLK. A helical membrane pass occupies residues 225–245; it reads SCFFLSITLLLVVTIIALWYV. The Cytoplasmic portion of the chain corresponds to 246-277; sequence EDKQWSPKADSDNEKTPFFGEIFGAFKVMKRP. A helical transmembrane segment spans residues 278-298; it reads MWMLLIVTALNWIAWFPFLLY. At 299 to 324 the chain is on the extracellular side; it reads DTDWMGREVYGGDSKGDDKMKKLYNQ. Residues 325–345 traverse the membrane as a helical segment; it reads GIHVGGLGLMLNSIVLGFMSL. Topologically, residues 346–359 are cytoplasmic; the sequence is GIEGISRKMGGAKR. Residues 360–380 form a helical membrane-spanning segment; it reads LWGAVNIILAVCLAMTVLVTK. Topologically, residues 381–403 are extracellular; that stretch reads KAEEHRRIAGPMALPTDGIRAGA. A helical membrane pass occupies residues 404-424; sequence LTLFALLGIPLAITFSIPFAL. Topologically, residues 425 to 446 are cytoplasmic; that stretch reads ASIISSSSGAGQGLSLGVLNMT. The helical transmembrane segment at 447-467 threads the bilayer; it reads IVIPQMVVSFGVGPIDALFGG. Residues 468 to 469 lie on the Extracellular side of the membrane; the sequence is GN. A helical transmembrane segment spans residues 470–490; sequence LPGFVVGAIAAAISSVVAFSV. Residues 491–492 lie on the Cytoplasmic side of the membrane; the sequence is LP.

It belongs to the glycoside-pentoside-hexuronide (GPH) cation symporter transporter (TC 2.A.2.4) family.

It localises to the cell membrane. It functions in the pathway glycan biosynthesis; sucrose metabolism. May be responsible for the transport of glucosides into the cell, with the concomitant uptake of protons (symport system). Does not seem to transport sucrose. This is Putative sucrose transport protein SUC6 from Arabidopsis thaliana (Mouse-ear cress).